The chain runs to 166 residues: UPF0561 protein C2orf68 homolog (166 aa).

Residues 36–49 (RDDYDKKVKQAAKE) show a composition bias toward basic and acidic residues. The interval 36 to 108 (RDDYDKKVKQ…EPEPPGHQLF (73 aa)) is disordered.

It belongs to the UPF0561 family.

In Bos taurus (Bovine), this protein is UPF0561 protein C2orf68 homolog.